The primary structure comprises 344 residues: Acireductone dioxygenase (344 aa).

Positions 92, 94, 98, and 137 each coordinate Fe(2+). Residues His-92, His-94, Glu-98, and His-137 each contribute to the Ni(2+) site.

The protein belongs to the acireductone dioxygenase (ARD) family. Requires Fe(2+) as cofactor. It depends on Ni(2+) as a cofactor.

It localises to the cytoplasm. It is found in the nucleus. The enzyme catalyses 1,2-dihydroxy-5-(methylsulfanyl)pent-1-en-3-one + O2 = 4-methylsulfanyl-2-oxobutanoate + formate + 2 H(+). The catalysed reaction is 1,2-dihydroxy-5-(methylsulfanyl)pent-1-en-3-one + O2 = 3-(methylsulfanyl)propanoate + CO + formate + 2 H(+). The protein operates within amino-acid biosynthesis; L-methionine biosynthesis via salvage pathway; L-methionine from S-methyl-5-thio-alpha-D-ribose 1-phosphate: step 5/6. Functionally, catalyzes 2 different reactions between oxygen and the acireductone 1,2-dihydroxy-3-keto-5-methylthiopentene (DHK-MTPene) depending upon the metal bound in the active site. Fe-containing acireductone dioxygenase (Fe-ARD) produces formate and 2-keto-4-methylthiobutyrate (KMTB), the alpha-ketoacid precursor of methionine in the methionine recycle pathway. Ni-containing acireductone dioxygenase (Ni-ARD) produces methylthiopropionate, carbon monoxide and formate, and does not lie on the methionine recycle pathway. The protein is Acireductone dioxygenase of Leishmania braziliensis.